Here is a 647-residue protein sequence, read N- to C-terminus: Leucine-rich repeat transmembrane protein FLRT3 (647 aa).

The first 28 residues, 1–28 (MITVPWSVFLIWTKIGLLLDMAPYSVAA), serve as a signal peptide directing secretion. Residues 29–526 (KPCPSVCRCD…KEPYKNSSVP (498 aa)) lie on the Extracellular side of the membrane. One can recognise an LRRNT domain in the interval 30-62 (PCPSVCRCDVGFIYCNDRDLTSIPTGIPEDATN). Intrachain disulfides connect Cys31-Cys37 and Cys35-Cys44. LRR repeat units follow at residues 58-82 (EDATNLFLQNNQINNAGIPSELKNL), 83-105 (RRVERIFLYHNSLDEFPTNLPKY), 107-126 (KELHLQENNIRTITYDSLSQ), 127-152 (IPYLEELHLDDNSVSAVSIEDGAFRD), 154-179 (IYLRLLFLSRNHLSTIPWGLPKTIEE), 181-197 (RLDDNRISTISELSLQD), 198-223 (LTNLKRLVLDGNLLNNHGLGDKVFMN), 225-246 (VNLTELSLVRNSLTAAPVNLPG), 247-269 (TNLRKLYLQENHINHVPPNAFSY), and 270-293 (LRQLYRLDMSNNNLSNLPQGVFDD). Asn226 is a glycosylation site (N-linked (GlcNAc...) asparagine). The region spanning 305 to 356 (NPWHCGCKMKWVRDWLQSLPLKVNVRGLMCQAPEKVRGMAIKDLNAELFDCK) is the LRRCT domain. The cysteines at positions 309 and 334 are disulfide-linked. Residues 404–502 (PVRKIITIFV…ECIETETAPL (99 aa)) form the Fibronectin type-III domain. A helical transmembrane segment spans residues 527-547 (LAAIIGGAVALVALALLALVC). Residues 548–647 (WYVHRNGALF…GIPDSDHSHS (100 aa)) are Cytoplasmic-facing. The tract at residues 620-647 (LYKNSHSESSSNRSYRDSGIPDSDHSHS) is disordered.

N-glycosylated. Post-translationally, proteolytic cleavage in the juxtamembrane region gives rise to a soluble ectodomain. Cleavage is probably effected by a metalloprotease.

It is found in the cell membrane. It localises to the endoplasmic reticulum membrane. The protein localises to the cell junction. Its subcellular location is the focal adhesion. The protein resides in the secreted. It is found in the cell projection. It localises to the axon. The protein localises to the growth cone membrane. In terms of biological role, modulates the structure and function of the apical ectodermal ridge (AER) that controls embryonic limb development. Functions in cell-cell adhesion, cell migration and axon guidance, exerting an attractive or repulsive role depending on its interaction partners. Plays a role in the spatial organization of brain neurons. Plays a role in vascular development. Plays a role in cell-cell adhesion via its interaction with latrophilins that are expressed at the surface of adjacent cells. Mediates axon attraction towards cells expressing NTN1. Mediates axon growth cone collapse and plays a repulsive role in neuron guidance via its interaction with UNC-5 family members. Plays a role in the regulation of the density of glutamaergic synapses. Plays a role in fibroblast growth factor-mediated signaling cascades. Required for normal morphogenesis during embryonic development, but not for normal embryonic patterning. The polypeptide is Leucine-rich repeat transmembrane protein FLRT3 (FLRT3) (Gallus gallus (Chicken)).